Consider the following 607-residue polypeptide: Phosphomethylpyrimidine synthase (607 aa).

Residues N216, M245, Y274, H310, 330–332, 371–374, and E410 contribute to the substrate site; these read SRG and DGLR. H414 provides a ligand contact to Zn(2+). Y437 provides a ligand contact to substrate. H478 is a binding site for Zn(2+). Residues C558, C561, and C566 each coordinate [4Fe-4S] cluster.

This sequence belongs to the ThiC family. In terms of assembly, homodimer. It depends on [4Fe-4S] cluster as a cofactor.

The enzyme catalyses 5-amino-1-(5-phospho-beta-D-ribosyl)imidazole + S-adenosyl-L-methionine = 4-amino-2-methyl-5-(phosphooxymethyl)pyrimidine + CO + 5'-deoxyadenosine + formate + L-methionine + 3 H(+). It participates in cofactor biosynthesis; thiamine diphosphate biosynthesis. Functionally, catalyzes the synthesis of the hydroxymethylpyrimidine phosphate (HMP-P) moiety of thiamine from aminoimidazole ribotide (AIR) in a radical S-adenosyl-L-methionine (SAM)-dependent reaction. The protein is Phosphomethylpyrimidine synthase of Agrobacterium fabrum (strain C58 / ATCC 33970) (Agrobacterium tumefaciens (strain C58)).